Here is an 85-residue protein sequence, read N- to C-terminus: Electron transfer flavoprotein regulatory factor 1 homolog (85 aa).

The protein belongs to the complex I LYR family. Highly expressed in the larval fat body.

It localises to the mitochondrion. In terms of biological role, acts as a regulator of the electron transfer flavoprotein by promoting the removal of flavin from the ETF holoenzyme. May act with the ETF complex to coordinate lipid homeostasis in the fat body in response to stage-specific demands. This is Electron transfer flavoprotein regulatory factor 1 homolog from Drosophila melanogaster (Fruit fly).